The primary structure comprises 412 residues: Divalent metal cation transporter MntH (412 aa).

Over 1-19 the chain is Cytoplasmic; it reads MTNYRVESSSGRAARKMRL. Residues 20–39 form a helical membrane-spanning segment; that stretch reads ALMGPAFIAAIGYIDPGNFA. Topologically, residues 40–51 are periplasmic; that stretch reads TNIQAGASFGYQ. A helical transmembrane segment spans residues 52-71; that stretch reads LLWVVVWANLMAMLIQILSA. Topologically, residues 72-95 are cytoplasmic; it reads KLGIATGKNLAEQIRDHYPRPVVW. The chain crosses the membrane as a helical span at residues 96-118; it reads FYWVQAEIIAMATDLAEFIGAAI. At 119–125 the chain is on the periplasmic side; that stretch reads GFKLILG. Residues 126–145 form a helical membrane-spanning segment; the sequence is VSLLQGAVLTGIATFLILML. The Cytoplasmic portion of the chain corresponds to 146 to 155; the sequence is QRRGQKPLEK. A helical transmembrane segment spans residues 156–175; that stretch reads VIGGLLLFVAAAYIVELIFS. Topologically, residues 176–196 are periplasmic; it reads QPNLAQLGKGMVIPSLPTSEA. A helical membrane pass occupies residues 197–220; sequence VFLAAGVLGATIMPHVIYLHSSLT. Over 221-238 the chain is Cytoplasmic; it reads QHLHGGSRQQRYSATKWD. A helical transmembrane segment spans residues 239–258; it reads VAIAMTIAGFVNLVMMATAA. Residues 259-276 lie on the Periplasmic side of the membrane; sequence AAFHFSGHTGVADLDEAY. Residues 277–297 form a helical membrane-spanning segment; sequence LTLQPLLSHAAATVFGLSLVA. The Cytoplasmic portion of the chain corresponds to 298-327; sequence AGLSSTVVGTLAGQVVMQGFIRFHIPLWVR. The helical transmembrane segment at 328-344 threads the bilayer; that stretch reads RTVTMLPSFIVILMGLD. The Periplasmic portion of the chain corresponds to 345 to 350; that stretch reads PTRILV. A helical transmembrane segment spans residues 351–370; that stretch reads MSQVLLSFGIALALVPLLIF. The Cytoplasmic segment spans residues 371–387; it reads TSDSKLMGDLVNSKRVK. Residues 388–406 traverse the membrane as a helical segment; it reads QTGWVIVVLVVALNIWLLV. Over 407–412 the chain is Periplasmic; sequence GTALGL.

The protein belongs to the NRAMP family.

It is found in the cell inner membrane. Functionally, h(+)-stimulated, divalent metal cation uptake system. This chain is Divalent metal cation transporter MntH, found in Shigella flexneri serotype 5b (strain 8401).